Reading from the N-terminus, the 260-residue chain is MFDIGVNLTSSQFEQDREQVVIRAKQAGVSGILITGTNAQESHQAMLLAQAYPDYCWSTAGVHPHDASQWNGDIAEQVHHMANAACVVAIGECGLDFNRNFSTPEEQERAFSAQLAIAAELSMPVFLHCRDAHPRFISLLTPWLGQLPAAVVHCFTGNRQELDACLAVGLTIGITGWVCDERRGLELRALLPHIPADRLLVETDAPYLLPRDLRPKPASRRNEPCYLPHIIRQIAEWRGEDATWLGQITDENARRIFRLA.

Residues Glu-92, His-128, and His-153 each coordinate a divalent metal cation.

It belongs to the metallo-dependent hydrolases superfamily. TatD-type hydrolase family. TatD subfamily. As to quaternary structure, monomer. It depends on Mg(2+) as a cofactor.

Its subcellular location is the cytoplasm. 3'-5' exonuclease that prefers single-stranded DNA and RNA. May play a role in the H(2)O(2)-induced DNA damage repair. The protein is 3'-5' ssDNA/RNA exonuclease TatD of Pectobacterium parmentieri (strain WPP163) (Pectobacterium wasabiae (strain WPP163)).